A 644-amino-acid polypeptide reads, in one-letter code: MLRKAFRYLVPVRCKSNSSIAGASTAGTSPSLPQTLQRRIEEIPLERYRNFSIVAHVDHGKSTLSDRLLELTGVVKPGAKQVLDKLEVERERGITVKAQTCSMFYHDKRTGLDYLLHLVDTPGHVDFRSEVSRSYASCGGALLLVDASQGVQAQTVANFYLAYSMNLKLLPVINKIDLSVANIAQAEDQVEDMFELPREDIVRVSAKTGLNVADLLPAIVDRIPPPTGYVEKPFRALLVDSWYDSYLGVVLLVYCVDGMVKKGDKIVSAHTSNKYEVKEVGIMYPERVATGKLSTGQVGYLVPGFKNSRDAKIGDTLMHQGRESETEVLPGFEEQKPMVFVGAFPADGAEFKALDDDIQRLVLNDRSVTLQRETSNALGQGWRLGFLGSLHASVFKERLENEYGSKLIITQPTVPYVVEYSDGTQITVTNPDDFPDLTLRRTKIKNFQEPYVEAIMTLPQDYLGRVITLCDDNRGIQKEITYINTTGQVMLKYDIPLAHLVDDFFGKLKSVTHGYASLDYEDAGYKPSDIVKMELLVNGKGVDALAQVMHRSQTERVAKEWVRKFKQYVKSQLYEVVIQAKANNKVLARETIKARRKDVLAKLHASDVSRRKKLLVKQKEGKKQMRSIGNVHIDQEAYQAFLRK.

The transit peptide at 1 to 14 (MLRKAFRYLVPVRC) directs the protein to the mitochondrion. A tr-type G domain is found at 46–227 (ERYRNFSIVA…AIVDRIPPPT (182 aa)). GTP contacts are provided by residues 55 to 62 (AHVDHGKS), 120 to 124 (DTPGH), and 174 to 177 (NKID).

It belongs to the TRAFAC class translation factor GTPase superfamily. Classic translation factor GTPase family. LepA subfamily.

Its subcellular location is the mitochondrion inner membrane. It catalyses the reaction GTP + H2O = GDP + phosphate + H(+). In terms of biological role, promotes mitochondrial protein synthesis. May act as a fidelity factor of the translation reaction, by catalyzing a one-codon backward translocation of tRNAs on improperly translocated ribosomes. Binds to mitochondrial ribosomes in a GTP-dependent manner. The polypeptide is Translation factor GUF1, mitochondrial (Eremothecium gossypii (strain ATCC 10895 / CBS 109.51 / FGSC 9923 / NRRL Y-1056) (Yeast)).